The primary structure comprises 323 residues: Ribosomal protein L11 methyltransferase (323 aa).

S-adenosyl-L-methionine contacts are provided by Thr160, Gly184, Asp206, and Asn257.

This sequence belongs to the methyltransferase superfamily. PrmA family.

It localises to the cytoplasm. The catalysed reaction is L-lysyl-[protein] + 3 S-adenosyl-L-methionine = N(6),N(6),N(6)-trimethyl-L-lysyl-[protein] + 3 S-adenosyl-L-homocysteine + 3 H(+). Functionally, methylates ribosomal protein L11. The polypeptide is Ribosomal protein L11 methyltransferase (Agathobacter rectalis (strain ATCC 33656 / DSM 3377 / JCM 17463 / KCTC 5835 / VPI 0990) (Eubacterium rectale)).